The following is a 511-amino-acid chain: Signal transduction histidine-protein kinase/phosphatase MprB (511 aa).

Residues 1-26 (MVGFRRGPRAPLRATSSLSLRWRVML) lie on the Cytoplasmic side of the membrane. Residues 27–47 (LAMSMVAMVVVLMSFAVYAVI) traverse the membrane as a helical segment. At 48 to 163 (SAALYSDIDN…PTEAVMTKLR (116 aa)) the chain is on the extracellular side. A helical membrane pass occupies residues 164 to 184 (AVLLIVGGVGVAVAAVAGGMV). Topologically, residues 185-511 (TRAGLRPVGR…SVDSQSARAR (327 aa)) are cytoplasmic. In terms of domain architecture, HAMP spans 186-238 (RAGLRPVGRLTEAAERVARTDDLRPIPVFGSDELARLTEAFNLMLRALAESRE). Residues 246 to 466 (DAGHELRTPL…AICMLLPGRP (221 aa)) form the Histidine kinase domain. At H249 the chain carries Phosphohistidine; by autocatalysis. The segment at 468 to 511 (PDSAYPAAPDDKKTEPVDTRGANGANSRGSANVISVDSQSARAR) is disordered. A compositionally biased stretch (basic and acidic residues) spans 476–485 (PDDKKTEPVD). Residues 491 to 511 (GANSRGSANVISVDSQSARAR) show a composition bias toward polar residues.

Mg(2+) is required as a cofactor. Mn(2+) serves as cofactor. In terms of processing, autophosphorylated.

It localises to the cell membrane. The catalysed reaction is ATP + protein L-histidine = ADP + protein N-phospho-L-histidine.. Its function is as follows. Member of the two-component regulatory system MprB/MprA which contributes to maintaining a balance among several systems involved in stress resistance and is required for establishment and maintenance of persistent infection in the host. In response to environmental signals MprB acts both as a membrane-associated protein kinase that undergoes autophosphorylation and subsequently transfers the phosphate to MprA, and a protein phosphatase that dephosphorylates phospho-MprA. The sequence is that of Signal transduction histidine-protein kinase/phosphatase MprB (mprB) from Mycobacterium ulcerans (strain Agy99).